The following is a 264-amino-acid chain: Triosephosphate isomerase (264 aa).

Position 13–15 (13–15) interacts with substrate; sequence NWK. Catalysis depends on H106, which acts as the Electrophile. The active-site Proton acceptor is the E179. Residues G185, S223, and 244–245 contribute to the substrate site; that span reads GG.

This sequence belongs to the triosephosphate isomerase family. As to quaternary structure, homodimer.

The protein localises to the cytoplasm. It catalyses the reaction D-glyceraldehyde 3-phosphate = dihydroxyacetone phosphate. It participates in carbohydrate biosynthesis; gluconeogenesis. The protein operates within carbohydrate degradation; glycolysis; D-glyceraldehyde 3-phosphate from glycerone phosphate: step 1/1. In terms of biological role, involved in the gluconeogenesis. Catalyzes stereospecifically the conversion of dihydroxyacetone phosphate (DHAP) to D-glyceraldehyde-3-phosphate (G3P). The polypeptide is Triosephosphate isomerase (Acinetobacter baumannii (strain AB0057)).